A 132-amino-acid polypeptide reads, in one-letter code: Small ribosomal subunit protein uS8c (132 aa).

This sequence belongs to the universal ribosomal protein uS8 family. Part of the 30S ribosomal subunit.

It localises to the plastid. The protein resides in the chloroplast. One of the primary rRNA binding proteins, it binds directly to 16S rRNA central domain where it helps coordinate assembly of the platform of the 30S subunit. This chain is Small ribosomal subunit protein uS8c (rps8), found in Nandina domestica (Heavenly bamboo).